Reading from the N-terminus, the 196-residue chain is DnaA initiator-associating protein DiaA (196 aa).

Residues 34–196 enclose the SIS domain; the sequence is LVQSLLNGNK…DNTLFPHQDD (163 aa).

This sequence belongs to the SIS family. DiaA subfamily. In terms of assembly, homotetramer; dimer of dimers.

Required for the timely initiation of chromosomal replication via direct interactions with the DnaA initiator protein. The protein is DnaA initiator-associating protein DiaA of Yersinia enterocolitica serotype O:8 / biotype 1B (strain NCTC 13174 / 8081).